The sequence spans 93 residues: MLQSRNDHLRQTALRNAHTPALLLTTLTEPQDRSLAINNPQLAADVKTAWLKEDPSLLLFVEQPDLSLLRDLVKTGATRKIRSEARHRLEEKQ.

This sequence to E.coli YdbD C-terminal region.

This is an uncharacterized protein from Escherichia coli (strain K12).